We begin with the raw amino-acid sequence, 289 residues long: Oxaloacetate decarboxylase (289 aa).

A substrate-binding site is contributed by S50. D88 contributes to the Mg(2+) binding site. Substrate contacts are provided by R159 and H235.

This sequence belongs to the isocitrate lyase/PEP mutase superfamily. Oxaloacetate decarboxylase family. Homotetramer; dimer of dimers. Requires Mg(2+) as cofactor.

It carries out the reaction oxaloacetate + H(+) = pyruvate + CO2. Catalyzes the decarboxylation of oxaloacetate into pyruvate. Seems to play a role in maintaining cellular concentrations of bicarbonate and pyruvate. This is Oxaloacetate decarboxylase from Pseudomonas putida (strain GB-1).